A 463-amino-acid polypeptide reads, in one-letter code: Putative WAS protein family homolog 3 (463 aa).

Residues 1–54 (MTPVRMQHSLAGQTYAVPLIQPDLRREEAVQQMADALQYLQKVSGDIFSRISQQ) are required for WASH complex assembly. Positions 1–165 (MTPVRMQHSL…EGLGGLPSNI (165 aa)) are WHD1. Residue Lys218 forms a Glycyl lysine isopeptide (Lys-Gly) (interchain with G-Cter in ubiquitin) linkage. Positions 295 to 463 (QDGVLTPPPP…AEEDEDDWES (169 aa)) are disordered. A compositionally biased stretch (pro residues) spans 300-312 (TPPPPPPPPPPAP). Positions 347–463 (QGAPREVVDP…AEEDEDDWES (117 aa)) are VCA. The WH2 domain occupies 359–381 (GRATLLESIRQAGGIGKAKLRSM). Positions 380–396 (SMKERKLEKKQQKEQEQ) are enriched in basic and acidic residues. The segment covering 422 to 434 (SGKGPGAGEGPGG) has biased composition (gly residues). Residues 454–463 (AEEDEDDWES) show a composition bias toward acidic residues.

It belongs to the WASH1 family. Component of the WASH core complex also described as WASH regulatory complex (SHRC) composed of WASH (WASHC1, WASH2P or WASH3P), WASHC2 (WASHC2A or WASHC2C), WASHC3, WASHC4 and WASHC5. The WASH core complex associates with the F-actin-capping protein dimer (formed by CAPZA1, CAPZA2 or CAPZA3 and CAPZB) in a transient or substoichiometric manner which was initially described as WASH complex. Interacts (via WHD1 region) with WASHC2C; the interaction is direct. Interacts with alpha-tubulin. Interacts with BECN1; WASHC1 and AMBRA1 can competitively interact with BECN1. Interacts with BLOC1S2; may associate with the BLOC-1 complex. Interacts with tubulin gamma chain (TUBG1 or TUBG2). Interacts with EXOC1, EXOC4, EXOC8; in MMP14-positive endosomes in breast tumor cells; indicative for an association with the exocyst complex.

Its subcellular location is the early endosome. The protein localises to the early endosome membrane. The protein resides in the recycling endosome membrane. It localises to the cell projection. It is found in the lamellipodium. Its subcellular location is the filopodium. The protein localises to the cytoplasmic vesicle. The protein resides in the autophagosome. It localises to the cytoplasm. It is found in the cytoskeleton. Its subcellular location is the microtubule organizing center. The protein localises to the centrosome. The protein resides in the centriole. In terms of biological role, acts as a nucleation-promoting factor at the surface of endosomes, where it recruits and activates the Arp2/3 complex to induce actin polymerization, playing a key role in the fission of tubules that serve as transport intermediates during endosome sorting. Involved in endocytic trafficking of EGF. Involved in transferrin receptor recycling. Regulates the trafficking of endosomal alpha5beta1 integrin to the plasma membrane and involved in invasive cell migration. In T-cells involved in endosome-to-membrane recycling of receptors including T-cell receptor (TCR), CD28 and ITGAL; proposed to be implicated in T cell proliferation and effector function. In dendritic cells involved in endosome-to-membrane recycling of major histocompatibility complex (MHC) class II probably involving retromer and subsequently allowing antigen sampling, loading and presentation during T-cell activation. Involved in Arp2/3 complex-dependent actin assembly driving Salmonella typhimurium invasion independent of ruffling. Involved in the exocytosis of MMP14 leading to matrix remodeling during invasive migration and implicating late endosome-to-plasma membrane tubular connections and cooperation with the exocyst complex. Involved in negative regulation of autophagy independently from its role in endosomal sorting by inhibiting BECN1 ubiquitination to inactivate PIK3C3/Vps34 activity. This is Putative WAS protein family homolog 3 (WASH3P) from Homo sapiens (Human).